A 472-amino-acid chain; its full sequence is Argininosuccinate lyase (472 aa).

Belongs to the lyase 1 family. Argininosuccinate lyase subfamily.

Its subcellular location is the cytoplasm. The catalysed reaction is 2-(N(omega)-L-arginino)succinate = fumarate + L-arginine. It functions in the pathway amino-acid biosynthesis; L-arginine biosynthesis; L-arginine from L-ornithine and carbamoyl phosphate: step 3/3. The chain is Argininosuccinate lyase from Synechococcus sp. (strain CC9311).